The following is a 585-amino-acid chain: A-type ATP synthase subunit A (585 aa).

The interval 192 to 211 (MRQEWPVREPRPTVEKKTPR) is disordered. A compositionally biased stretch (basic and acidic residues) spans 196–211 (WPVREPRPTVEKKTPR). 237-244 (GPFGSGKT) lines the ATP pocket.

This sequence belongs to the ATPase alpha/beta chains family. As to quaternary structure, has multiple subunits with at least A(3), B(3), C, D, E, F, H, I and proteolipid K(x).

It is found in the cell membrane. The catalysed reaction is ATP + H2O + 4 H(+)(in) = ADP + phosphate + 5 H(+)(out). Component of the A-type ATP synthase that produces ATP from ADP in the presence of a proton gradient across the membrane. The A chain is the catalytic subunit. The protein is A-type ATP synthase subunit A of Haloquadratum walsbyi (strain DSM 16790 / HBSQ001).